We begin with the raw amino-acid sequence, 498 residues long: Ulvan-active sulfatase (498 aa).

A signal peptide spans 1 to 22; sequence MNSKKTGVIILGCIAFLHIACS. Positions 55, 56, 95, 266, and 267 each coordinate Ca(2+). C95 functions as the Nucleophile in the catalytic mechanism. C95 is modified (3-oxoalanine (Cys)).

This sequence belongs to the sulfatase family. Requires Ca(2+) as cofactor. The conversion to 3-oxoalanine (also known as C-formylglycine, FGly), of a serine or cysteine residue in prokaryotes and of a cysteine residue in eukaryotes, is critical for catalytic activity. This post-translational modification is severely defective in multiple sulfatase deficiency (MSD).

Its subcellular location is the periplasm. Its function is as follows. Sulfatase involved in ulvan degradation. Ulvan is the main polysaccharide component of the Ulvales (green seaweed) cell wall. It is composed of disaccharide building blocks comprising 3-sulfated rhamnose (Rha3S) linked to D-glucuronic acid (GlcA), L-iduronic acid (IduA), or D-xylose (Xyl). The chain is Ulvan-active sulfatase from Formosa agariphila (strain DSM 15362 / KCTC 12365 / LMG 23005 / KMM 3901 / M-2Alg 35-1).